We begin with the raw amino-acid sequence, 206 residues long: Putative transporter protein AmiS2 (206 aa).

The next 7 membrane-spanning stretches (helical) occupy residues 4-24 (VGLL…LGTV), 29-49 (ASVL…VMLI), 56-76 (SAVL…YVGI), 86-106 (GIGW…FLSF), 113-133 (VFGV…LVLG), 142-162 (FTGW…AFLI), and 173-193 (VAAG…ILAA).

Belongs to the AmiS/UreI family.

It is found in the cell membrane. In terms of biological role, possible transporter that might be responsible for the adsorption of amidase substrates or release of their hydrolysis products. The sequence is that of Putative transporter protein AmiS2 (amiS2) from Rhodococcus erythropolis (Arthrobacter picolinophilus).